An 89-amino-acid polypeptide reads, in one-letter code: Sec translocon accessory complex subunit YrbF (89 aa).

A helical transmembrane segment spans residues 4-24 (GTLGTLVPIILMFAVLYFLLI).

It belongs to the YajC family. Part of the SecDF-YidC-YajC translocase complex. The SecDF-YidC-YajC translocase forms a supercomplex with SecYEG, called the holo-translocon (HTL).

Its subcellular location is the cell membrane. Functionally, the SecYEG-SecDF-YajC-YidC holo-translocon (HTL) protein secretase/insertase is a supercomplex required for protein secretion, insertion of proteins into membranes, and assembly of membrane protein complexes. While the SecYEG complex is essential for assembly of a number of proteins and complexes, the SecDF-YajC-YidC subcomplex facilitates these functions. This chain is Sec translocon accessory complex subunit YrbF (yrbF), found in Bacillus subtilis (strain 168).